The primary structure comprises 347 residues: GMP reductase (347 aa).

NADP(+) is bound at residue Ala108–Ala131. Residues Gly181 and Gly183 each contribute to the K(+) site. The active-site Thioimidate intermediate is the Cys186. Ile216 to Val239 serves as a coordination point for NADP(+).

It belongs to the IMPDH/GMPR family. GuaC type 1 subfamily. Homotetramer.

It catalyses the reaction IMP + NH4(+) + NADP(+) = GMP + NADPH + 2 H(+). Its function is as follows. Catalyzes the irreversible NADPH-dependent deamination of GMP to IMP. It functions in the conversion of nucleobase, nucleoside and nucleotide derivatives of G to A nucleotides, and in maintaining the intracellular balance of A and G nucleotides. In Yersinia enterocolitica serotype O:8 / biotype 1B (strain NCTC 13174 / 8081), this protein is GMP reductase.